A 297-amino-acid chain; its full sequence is Small ribosomal subunit protein uS2 (297 aa).

Residues 252–297 (GVPGTAFSAATAAPTSWEADGGDWAASSAAPAGESWAETQPAEAKW) form a disordered region. Positions 256–289 (TAFSAATAAPTSWEADGGDWAASSAAPAGESWAE) are enriched in low complexity.

This sequence belongs to the universal ribosomal protein uS2 family. In terms of assembly, component of the small ribosomal subunit. Mature ribosomes consist of a small (40S) and a large (60S) subunit. The 40S subunit contains about 33 different proteins and 1 molecule of RNA (18S). The 60S subunit contains about 49 different proteins and 3 molecules of RNA (25S, 5.8S and 5S). Interacts with rps21.

It is found in the cytoplasm. Functionally, required for the assembly and/or stability of the 40S ribosomal subunit. Required for the processing of the 20S rRNA-precursor to mature 18S rRNA in a late step of the maturation of 40S ribosomal subunits. This chain is Small ribosomal subunit protein uS2 (rps0), found in Aspergillus fumigatus (strain CBS 144.89 / FGSC A1163 / CEA10) (Neosartorya fumigata).